The primary structure comprises 176 residues: Peptide methionine sulfoxide reductase MsrA (176 aa).

Residue C12 is part of the active site.

This sequence belongs to the MsrA Met sulfoxide reductase family.

It catalyses the reaction L-methionyl-[protein] + [thioredoxin]-disulfide + H2O = L-methionyl-(S)-S-oxide-[protein] + [thioredoxin]-dithiol. The catalysed reaction is [thioredoxin]-disulfide + L-methionine + H2O = L-methionine (S)-S-oxide + [thioredoxin]-dithiol. Its function is as follows. Has an important function as a repair enzyme for proteins that have been inactivated by oxidation. Catalyzes the reversible oxidation-reduction of methionine sulfoxide in proteins to methionine. This chain is Peptide methionine sulfoxide reductase MsrA, found in Thermus thermophilus (strain ATCC 27634 / DSM 579 / HB8).